The primary structure comprises 2885 residues: Chromodomain-helicase-DNA-binding protein 9 (2885 aa).

The tract at residues 173 to 195 is disordered; that stretch reads QCSSLHSQQSRSNLNPGQNSLGQ. Lysine 197 is covalently cross-linked (Glycyl lysine isopeptide (Lys-Gly) (interchain with G-Cter in SUMO2)). Disordered stretches follow at residues 242–263, 283–347, and 479–677; these read CSSH…CSVS, SLLQ…QGNY, and CLQR…QPLQ. Polar residues-rich tracts occupy residues 243-263 and 283-310; these read SSHQ…CSVS and SLLQ…NSFS. The span at 323-334 shows a compositional bias: low complexity; that stretch reads LLNPTPSLNSNN. Composition is skewed to polar residues over residues 335–347 and 483–505; these read FQIL…QGNY and QPPS…TQVR. N6-acetyllysine is present on lysine 498. Composition is skewed to basic and acidic residues over residues 507–526 and 534–544; these read MSEK…EKAN and ARAKERGERNI. Serine 549 carries the phosphoserine modification. Basic and acidic residues predominate over residues 572–592; that stretch reads KPKDRDNKKPKTYSKLKEKTK. A Glycyl lysine isopeptide (Lys-Gly) (interchain with G-Cter in SUMO2) cross-link involves residue lysine 595. Serine 610 is modified (phosphoserine). Over residues 617–630 the composition is skewed to basic and acidic residues; it reads AEQRSQHTFKEQHS. Residues 631-643 show a composition bias toward basic residues; it reads QKRRSNRQIKRKK. Positions 644–659 are enriched in basic and acidic residues; that stretch reads YAEDAEGKQSEEEVKG. Chromo domains are found at residues 689–760 and 772–838; these read AIVD…HFLA and VEVD…HLDR. Residues 867–871 carry the LXXLL motif 1 motif; the sequence is LNWLL. The Helicase ATP-binding domain maps to 871–1045; it reads LFNWYNRRNC…FSLLHFLEPL (175 aa). Position 884-891 (884-891) interacts with ATP; the sequence is DEMGLGKT. The DEAH box motif lies at 996–999; it reads DEAH. Residues 1035-1039 carry the LXXLL motif 2 motif; sequence LFSLL. The Helicase C-terminal domain maps to 1185–1336; it reads LIDKLLPKMK…KAVLQSMSGR (152 aa). Residues 1460 to 1484 form a disordered region; it reads KDELAELSEAESEGEEKPKLRRPCD. Positions 1464 to 1473 are enriched in acidic residues; the sequence is AELSEAESEG. 2 positions are modified to phosphoserine: serine 1467 and serine 1471. Residues 1474 to 1484 show a composition bias toward basic and acidic residues; the sequence is EEKPKLRRPCD. Residues lysine 1587, lysine 1737, and lysine 1902 each participate in a glycyl lysine isopeptide (Lys-Gly) (interchain with G-Cter in SUMO2) cross-link. Serine 2025 carries the post-translational modification Phosphoserine. The LXXLL motif 3 motif lies at 2030–2034; it reads LPRLL. A Glycyl lysine isopeptide (Lys-Gly) (interchain with G-Cter in SUMO2) cross-link involves residue lysine 2037. The tract at residues 2046 to 2238 is disordered; it reads VKSESLTEEP…TQDSFQANNG (193 aa). Residues serine 2057 and serine 2058 each carry the phosphoserine modification. Lysine 2073 is covalently cross-linked (Glycyl lysine isopeptide (Lys-Gly) (interchain with G-Cter in SUMO2)). Phosphoserine is present on residues serine 2074 and serine 2078. The span at 2083–2092 shows a compositional bias: polar residues; it reads VLSQATGDQK. A compositionally biased stretch (basic and acidic residues) spans 2093 to 2103; that stretch reads SGGKSETDRRM. Over residues 2127–2193 the composition is skewed to low complexity; it reads SQSSSDSDSD…SSSSSSSSSS (67 aa). Positions 2201-2215 are enriched in basic and acidic residues; it reads DVQKREGTPHRKAYD. Residues 2220 to 2238 show a composition bias toward polar residues; that stretch reads ASLSTTQDETQDSFQANNG. The segment at 2331–2471 is binds A/T-rich DNA; the sequence is QMSKVKKHVR…LSYPQPQRIP (141 aa). Residues lysine 2349, lysine 2355, and lysine 2360 each participate in a glycyl lysine isopeptide (Lys-Gly) (interchain with G-Cter in SUMO2) cross-link. Residues 2428–2435 form an a.T hook-like region; the sequence is KKRRGRRR. Residues 2473 to 2494 are disordered; it reads TESPVPVINLKDGTRLAGDDAP. Basic and acidic residues predominate over residues 2484-2494; the sequence is DGTRLAGDDAP. The short motif at 2710–2714 is the LXXLL motif 4 element; it reads LPNLL. The disordered stretch occupies residues 2724–2770; it reads AESGAEEKRGNDSKELEGKKERTESQSPENGGERCVPGSPSTSSTAA. Basic and acidic residues predominate over residues 2728-2747; the sequence is AEEKRGNDSKELEGKKERTE. Positions 2782–2786 match the LXXLL motif 5 motif; that stretch reads LNPLL. The segment covering 2818 to 2847 has biased composition (basic and acidic residues); the sequence is KNKSDDLDSSKSVEIKEENSRVRDQEEKGG. The interval 2818–2885 is disordered; it reads KNKSDDLDSS…SEDSDSSNED (68 aa). A Glycyl lysine isopeptide (Lys-Gly) (interchain with G-Cter in SUMO2) cross-link involves residue lysine 2833. Over residues 2864 to 2876 the composition is skewed to low complexity; the sequence is RASSGSDSSSSSS.

It belongs to the SNF2/RAD54 helicase family. Interacts with PPARA. Probably interacts with ESR1 and NR1I3. Phosphorylated on serine and tyrosine residues. As to expression, expressed in osteoprogenitor cells during development and in mature bone (at protein level).

It is found in the cytoplasm. It localises to the nucleus. The enzyme catalyses ATP + H2O = ADP + phosphate + H(+). In terms of biological role, probable ATP-dependent chromatin-remodeling factor. Acts as a transcriptional coactivator for PPARA and possibly other nuclear receptors. Has DNA-dependent ATPase activity and binds to A/T-rich DNA. Associates with A/T-rich regulatory regions in promoters of genes that participate in the differentiation of progenitors during osteogenesis. The sequence is that of Chromodomain-helicase-DNA-binding protein 9 (Chd9) from Mus musculus (Mouse).